The sequence spans 880 residues: DNA polymerase I (880 aa).

One can recognise a 5'-3' exonuclease domain in the interval 174 to 268 (TPEQIIDMKG…SGLEYQGFNR (95 aa)). The 3'-5' exonuclease domain maps to 302-470 (DINVKTVTDV…LREKLVQELE (169 aa)).

Belongs to the DNA polymerase type-A family. Single-chain monomer with multiple functions.

It carries out the reaction DNA(n) + a 2'-deoxyribonucleoside 5'-triphosphate = DNA(n+1) + diphosphate. In addition to polymerase activity, this DNA polymerase exhibits 3'-5' and 5'-3' exonuclease activity. The protein is DNA polymerase I (polA) of Bacillus subtilis (strain 168).